The sequence spans 314 residues: Acetyl-coenzyme A carboxylase carboxyl transferase subunit beta (314 aa).

The region spanning 37-307 (LWQKCPACDT…MSLPSIDSEA (271 aa)) is the CoA carboxyltransferase N-terminal domain. The Zn(2+) site is built by cysteine 41, cysteine 44, cysteine 60, and cysteine 63. The C4-type zinc finger occupies 41 to 63 (CPACDTLTYTKDLQQNWQVCPSC).

It belongs to the AccD/PCCB family. In terms of assembly, acetyl-CoA carboxylase is a heterohexamer composed of biotin carboxyl carrier protein (AccB), biotin carboxylase (AccC) and two subunits each of ACCase subunit alpha (AccA) and ACCase subunit beta (AccD). Zn(2+) is required as a cofactor.

It localises to the cytoplasm. The catalysed reaction is N(6)-carboxybiotinyl-L-lysyl-[protein] + acetyl-CoA = N(6)-biotinyl-L-lysyl-[protein] + malonyl-CoA. The protein operates within lipid metabolism; malonyl-CoA biosynthesis; malonyl-CoA from acetyl-CoA: step 1/1. Functionally, component of the acetyl coenzyme A carboxylase (ACC) complex. Biotin carboxylase (BC) catalyzes the carboxylation of biotin on its carrier protein (BCCP) and then the CO(2) group is transferred by the transcarboxylase to acetyl-CoA to form malonyl-CoA. The polypeptide is Acetyl-coenzyme A carboxylase carboxyl transferase subunit beta (Synechococcus sp. (strain JA-2-3B'a(2-13)) (Cyanobacteria bacterium Yellowstone B-Prime)).